The primary structure comprises 347 residues: S-adenosylmethionine:tRNA ribosyltransferase-isomerase (347 aa).

Belongs to the QueA family. Monomer.

Its subcellular location is the cytoplasm. It catalyses the reaction 7-aminomethyl-7-carbaguanosine(34) in tRNA + S-adenosyl-L-methionine = epoxyqueuosine(34) in tRNA + adenine + L-methionine + 2 H(+). Its pathway is tRNA modification; tRNA-queuosine biosynthesis. Its function is as follows. Transfers and isomerizes the ribose moiety from AdoMet to the 7-aminomethyl group of 7-deazaguanine (preQ1-tRNA) to give epoxyqueuosine (oQ-tRNA). The polypeptide is S-adenosylmethionine:tRNA ribosyltransferase-isomerase (Pseudomonas aeruginosa (strain ATCC 15692 / DSM 22644 / CIP 104116 / JCM 14847 / LMG 12228 / 1C / PRS 101 / PAO1)).